A 565-amino-acid chain; its full sequence is Adenine deaminase (565 aa).

Belongs to the metallo-dependent hydrolases superfamily. Adenine deaminase family. Requires Mn(2+) as cofactor.

It carries out the reaction adenine + H2O + H(+) = hypoxanthine + NH4(+). The sequence is that of Adenine deaminase from Cereibacter sphaeroides (strain ATCC 17023 / DSM 158 / JCM 6121 / CCUG 31486 / LMG 2827 / NBRC 12203 / NCIMB 8253 / ATH 2.4.1.) (Rhodobacter sphaeroides).